Here is a 422-residue protein sequence, read N- to C-terminus: Serine--tRNA ligase (422 aa).

231-233 (TGE) contributes to the L-serine binding site. 262–264 (RQE) serves as a coordination point for ATP. E285 is an L-serine binding site. ATP is bound at residue 349–352 (EISS). An L-serine-binding site is contributed by S384.

It belongs to the class-II aminoacyl-tRNA synthetase family. Type-1 seryl-tRNA synthetase subfamily. In terms of assembly, homodimer. The tRNA molecule binds across the dimer.

Its subcellular location is the cytoplasm. The catalysed reaction is tRNA(Ser) + L-serine + ATP = L-seryl-tRNA(Ser) + AMP + diphosphate + H(+). It catalyses the reaction tRNA(Sec) + L-serine + ATP = L-seryl-tRNA(Sec) + AMP + diphosphate + H(+). It participates in aminoacyl-tRNA biosynthesis; selenocysteinyl-tRNA(Sec) biosynthesis; L-seryl-tRNA(Sec) from L-serine and tRNA(Sec): step 1/1. Its function is as follows. Catalyzes the attachment of serine to tRNA(Ser). Is also able to aminoacylate tRNA(Sec) with serine, to form the misacylated tRNA L-seryl-tRNA(Sec), which will be further converted into selenocysteinyl-tRNA(Sec). In Mesoplasma florum (strain ATCC 33453 / NBRC 100688 / NCTC 11704 / L1) (Acholeplasma florum), this protein is Serine--tRNA ligase.